A 115-amino-acid polypeptide reads, in one-letter code: Insulin-like peptide IlO1_i1 (115 aa).

The first 20 residues, 1–20 (MFVYTTIMLLLLAEINHSQG), serve as a signal peptide directing secretion. Intrachain disulfides connect C40–C101, C52–C114, and C100–C105. A propeptide spans 59–93 (RRNRITGLDQRSIFESNLLAKRFLISRRQIVNNRR) (c peptide).

This sequence belongs to the insulin family. In terms of tissue distribution, expressed in tentacles.

The protein localises to the secreted. Heterodimer with unknown function. Surprisingly, the truncated synthetic analog (dimer of 27-58 and 94-115) does not bind to long insulin receptor (HIR-B) and insulin-like growth factor 1 receptor. This truncated synthetic analog shows very weak inhibitory activity on different voltage-gated channels. This Oulactis sp. (Sea anemone) protein is Insulin-like peptide IlO1_i1.